The following is a 316-amino-acid chain: Carbamate kinase-like protein YahI (316 aa).

Belongs to the carbamate kinase family.

This chain is Carbamate kinase-like protein YahI (yahI), found in Escherichia coli (strain K12).